An 876-amino-acid polypeptide reads, in one-letter code: Translation initiation factor IF-2 (876 aa).

Residues V164 to A288 form a disordered region. Residues A179 to E219 are compositionally biased toward low complexity. A compositionally biased stretch (basic and acidic residues) spans V244 to G259. Residues A378–K547 form the tr-type G domain. The segment at G387–T394 is G1. GTP is bound at residue G387–T394. Positions G412–H416 are G2. The segment at D433–G436 is G3. GTP-binding positions include D433–H437 and T487–D490. The segment at T487 to D490 is G4. Residues S523–K525 form a G5 region.

It belongs to the TRAFAC class translation factor GTPase superfamily. Classic translation factor GTPase family. IF-2 subfamily.

Its subcellular location is the cytoplasm. One of the essential components for the initiation of protein synthesis. Protects formylmethionyl-tRNA from spontaneous hydrolysis and promotes its binding to the 30S ribosomal subunits. Also involved in the hydrolysis of GTP during the formation of the 70S ribosomal complex. This Nitrosospira multiformis (strain ATCC 25196 / NCIMB 11849 / C 71) protein is Translation initiation factor IF-2.